The sequence spans 186 residues: Inosine/xanthosine triphosphatase (186 aa).

Gln75 serves as a coordination point for Mg(2+).

This sequence belongs to the YjjX NTPase family. Homodimer. Requires Mg(2+) as cofactor. The cofactor is Mn(2+).

The catalysed reaction is XTP + H2O = XDP + phosphate + H(+). The enzyme catalyses ITP + H2O = IDP + phosphate + H(+). Its function is as follows. Phosphatase that hydrolyzes non-canonical purine nucleotides such as XTP and ITP to their respective diphosphate derivatives. Probably excludes non-canonical purines from DNA/RNA precursor pool, thus preventing their incorporation into DNA/RNA and avoiding chromosomal lesions. The chain is Inosine/xanthosine triphosphatase from Shewanella baltica (strain OS185).